The primary structure comprises 61 residues: Large ribosomal subunit protein uL29 (61 aa).

This sequence belongs to the universal ribosomal protein uL29 family.

The protein is Large ribosomal subunit protein uL29 of Nitratidesulfovibrio vulgaris (strain DSM 19637 / Miyazaki F) (Desulfovibrio vulgaris).